A 260-amino-acid chain; its full sequence is UPF0294 protein plu0699 (260 aa).

It belongs to the UPF0294 family.

The protein resides in the cytoplasm. The protein is UPF0294 protein plu0699 of Photorhabdus laumondii subsp. laumondii (strain DSM 15139 / CIP 105565 / TT01) (Photorhabdus luminescens subsp. laumondii).